We begin with the raw amino-acid sequence, 154 residues long: Large ribosomal subunit protein uL23 (154 aa).

This sequence belongs to the universal ribosomal protein uL23 family.

This protein binds to a specific region on the 26S rRNA. The sequence is that of Large ribosomal subunit protein uL23 (RPL23A) from Daucus carota (Wild carrot).